The following is a 640-amino-acid chain: Arogenate dehydrogenase 1, chloroplastic (640 aa).

A chloroplast-targeting transit peptide spans 1–18; sequence MAETLITKPPLSLSFTSL. Prephenate/arogenate dehydrogenase domains lie at 53–334 and 365–640; these read LRIA…GEND and LKIG…LLTS.

This sequence belongs to the prephenate/arogenate dehydrogenase family. In terms of tissue distribution, expressed in roots, stems, leaves, flowers, siliques and seeds. More abundant in seeds.

It localises to the plastid. The protein localises to the chloroplast. The catalysed reaction is L-arogenate + NADP(+) = L-tyrosine + CO2 + NADPH. It functions in the pathway amino-acid biosynthesis; L-tyrosine biosynthesis; L-tyrosine from L-arogenate (NADP(+) route): step 1/1. Its function is as follows. Involved in the biosynthesis of tyrosine. Has no prephenate dehydrogenase activity. In Arabidopsis thaliana (Mouse-ear cress), this protein is Arogenate dehydrogenase 1, chloroplastic (TYRAAT1).